We begin with the raw amino-acid sequence, 349 residues long: ATPase GET3 (349 aa).

ATP is bound at residue 26 to 33; that stretch reads KGGVGKTT. Asp-57 is an active-site residue. Positions 243 and 270 each coordinate ATP. Zn(2+) is bound by residues Cys-280 and Cys-283.

The protein belongs to the arsA ATPase family. As to quaternary structure, homodimer. Component of the Golgi to ER traffic (GET) complex, which is composed of GET1, GET2 and GET3. Within the complex, GET1 and GET2 form a heterotetramer which is stabilized by phosphatidylinositol binding and which binds to the GET3 homodimer. Interacts with the chloride channel protein GEF1.

It localises to the cytoplasm. Its subcellular location is the endoplasmic reticulum. The protein localises to the golgi apparatus. ATPase required for the post-translational delivery of tail-anchored (TA) proteins to the endoplasmic reticulum. Recognizes and selectively binds the transmembrane domain of TA proteins in the cytosol. This complex then targets to the endoplasmic reticulum by membrane-bound receptors GET1 and GET2, where the tail-anchored protein is released for insertion. This process is regulated by ATP binding and hydrolysis. ATP binding drives the homodimer towards the closed dimer state, facilitating recognition of newly synthesized TA membrane proteins. ATP hydrolysis is required for insertion. Subsequently, the homodimer reverts towards the open dimer state, lowering its affinity for the GET1-GET2 receptor, and returning it to the cytosol to initiate a new round of targeting. Cooperates with the HDEL receptor ERD2 to mediate the ATP-dependent retrieval of resident ER proteins that contain a C-terminal H-D-E-L retention signal from the Golgi to the ER. Involved in low-level resistance to the oxyanions arsenite and arsenate, and in heat tolerance. The chain is ATPase GET3 from Clavispora lusitaniae (strain ATCC 42720) (Yeast).